A 688-amino-acid chain; its full sequence is Zinc finger protein 770 (688 aa).

K11 participates in a covalent cross-link: Glycyl lysine isopeptide (Lys-Gly) (interchain with G-Cter in SUMO2). C2H2-type zinc fingers lie at residues 27–49, 55–77, and 81–103; these read YVCNICFKHFETPSKLARHYLIH, FECDVCHKTFRQLVHLERHQLTH, and FKCSICQRHFKNLKTFVKHQQLH. Residues K112, K121, and K146 each participate in a glycyl lysine isopeptide (Lys-Gly) (interchain with G-Cter in SUMO2) cross-link. 3 consecutive C2H2-type zinc fingers follow at residues 160-182, 188-210, and 216-238; these read HACTICGKMFPSQSKLDRHVLIH, FKCVLCTKSFRQSTHLKIHQLTH, and FQCCFCQKGFKIQSKLLKHKQIH. K262 participates in a covalent cross-link: Glycyl lysine isopeptide (Lys-Gly) (interchain with G-Cter in SUMO2). The segment at 294-318 adopts a C2H2-type 7; degenerate zinc-finger fold; the sequence is FQCPKCEKCFESEQILNEHSCFPAR. Glycyl lysine isopeptide (Lys-Gly) (interchain with G-Cter in SUMO2) cross-links involve residues K420 and K437. C2H2-type zinc fingers lie at residues 475 to 497, 503 to 525, 623 to 645, and 651 to 673; these read CPCDKCEKVFPSISKLKRHYLIH, FGCNICGKSFRQSAHLKRHEQTH, YRCSVCAKSFRSPSKLERHYLIH, and FECSVCGKTFRQAPHWKRHQLTH. K681 is covalently cross-linked (Glycyl lysine isopeptide (Lys-Gly) (interchain with G-Cter in SUMO2)).

This sequence belongs to the krueppel C2H2-type zinc-finger protein family.

It is found in the nucleus. Functionally, may be involved in transcriptional regulation. This Pongo abelii (Sumatran orangutan) protein is Zinc finger protein 770 (ZNF770).